We begin with the raw amino-acid sequence, 602 residues long: Proteasome-associated ATPase (602 aa).

Residues 13-89 adopt a coiled-coil conformation; the sequence is PDAAEVERLR…LREEVDRLGQ (77 aa). ATP is bound at residue 289–294; sequence GCGKTL. Residues 601–602 are docks into pockets in the proteasome alpha-ring; the sequence is YL.

This sequence belongs to the AAA ATPase family. In terms of assembly, homohexamer. Assembles into a hexameric ring structure that caps the 20S proteasome core. Strongly interacts with the prokaryotic ubiquitin-like protein Pup through a hydrophobic interface; the interacting region of ARC lies in its N-terminal coiled-coil domain. There is one Pup binding site per ARC hexamer ring. Upon ATP-binding, the C-terminus of ARC interacts with the alpha-rings of the proteasome core, possibly by binding to the intersubunit pockets.

It functions in the pathway protein degradation; proteasomal Pup-dependent pathway. Its function is as follows. ATPase which is responsible for recognizing, binding, unfolding and translocation of pupylated proteins into the bacterial 20S proteasome core particle. May be essential for opening the gate of the 20S proteasome via an interaction with its C-terminus, thereby allowing substrate entry and access to the site of proteolysis. Thus, the C-termini of the proteasomal ATPase may function like a 'key in a lock' to induce gate opening and therefore regulate proteolysis. The chain is Proteasome-associated ATPase from Mycobacteroides abscessus (strain ATCC 19977 / DSM 44196 / CCUG 20993 / CIP 104536 / JCM 13569 / NCTC 13031 / TMC 1543 / L948) (Mycobacterium abscessus).